We begin with the raw amino-acid sequence, 185 residues long: Translation initiation factor IF-3 (185 aa).

It belongs to the IF-3 family. In terms of assembly, monomer.

The protein resides in the cytoplasm. In terms of biological role, IF-3 binds to the 30S ribosomal subunit and shifts the equilibrium between 70S ribosomes and their 50S and 30S subunits in favor of the free subunits, thus enhancing the availability of 30S subunits on which protein synthesis initiation begins. The sequence is that of Translation initiation factor IF-3 from Streptococcus pneumoniae serotype 19F (strain G54).